Consider the following 105-residue polypeptide: MARSVSSFKFLGASVFDALYVSISRRGYSGAPPAAVTASFGRPGAMGKVERRYAMKESSSSETRAYSSAWAPDPVTGYYRPENCGAEIDAADLREMMLNHRVRSQ.

It belongs to the LEA type 3 family.

This chain is Late embryogenesis abundant protein Lea5-A (LEA5-A), found in Gossypium hirsutum (Upland cotton).